A 385-amino-acid chain; its full sequence is Benzoate O-methyltransferase (385 aa).

Residue Tyr-18 participates in S-adenosyl-L-homocysteine binding. Gln-25 provides a ligand contact to benzoate. S-adenosyl-L-homocysteine-binding residues include Cys-59, Asn-64, Asp-106, Leu-107, Ser-145, and Tyr-146. Trp-167 serves as a coordination point for benzoate. Mg(2+)-binding residues include Asn-184, Glu-270, Phe-272, and Asn-273.

It belongs to the methyltransferase superfamily. Type-7 methyltransferase family. SABATH subfamily. The cofactor is Mg(2+).

It catalyses the reaction benzoate + S-adenosyl-L-methionine = methyl benzoate + S-adenosyl-L-homocysteine. Its function is as follows. Methyltransferase involved in the biosynthesis of methyl benzoate in response to stresses. Utilizes exclusively benzoic acid (BA) as substrate. The sequence is that of Benzoate O-methyltransferase (OMT8) from Zea mays (Maize).